Consider the following 577-residue polypeptide: Arginine--tRNA ligase (577 aa).

A 'HIGH' region motif is present at residues 122–132 (PNVAKEMHVGH).

The protein belongs to the class-I aminoacyl-tRNA synthetase family. In terms of assembly, monomer.

It is found in the cytoplasm. It carries out the reaction tRNA(Arg) + L-arginine + ATP = L-arginyl-tRNA(Arg) + AMP + diphosphate. This is Arginine--tRNA ligase from Vibrio vulnificus (strain CMCP6).